The chain runs to 146 residues: Hemoglobin subunit beta (146 aa).

An N-acetylvaline modification is found at V1. Residues 2 to 146 (HLTPEEKSAV…VANALAHKYH (145 aa)) enclose the Globin domain. The residue at position 12 (T12) is a Phosphothreonine. Phosphoserine is present on S44. N6-acetyllysine is present on K59. H63 is a binding site for heme b. The residue at position 82 (K82) is an N6-acetyllysine. H92 contributes to the heme b binding site. S-nitrosocysteine is present on C93. K144 is subject to N6-acetyllysine.

Belongs to the globin family. As to quaternary structure, heterotetramer of two alpha chains and two beta chains. In terms of tissue distribution, red blood cells.

In terms of biological role, involved in oxygen transport from the lung to the various peripheral tissues. The protein is Hemoglobin subunit beta (HBB) of Hylobates lar (Lar gibbon).